The following is a 277-amino-acid chain: Probable redox regulatory protein ML2435 (277 aa).

It belongs to the Rv0495c family.

Essential for maintaining intracellular redox homeostasis. The polypeptide is Probable redox regulatory protein ML2435 (Mycobacterium leprae (strain TN)).